Consider the following 763-residue polypeptide: Xaa-Pro dipeptidyl-peptidase (763 aa).

Residues S349, D469, and H499 each act as charge relay system in the active site.

This sequence belongs to the peptidase S15 family. Homodimer.

Its subcellular location is the cytoplasm. It carries out the reaction Hydrolyzes Xaa-Pro-|- bonds to release unblocked, N-terminal dipeptides from substrates including Ala-Pro-|-p-nitroanilide and (sequentially) Tyr-Pro-|-Phe-Pro-|-Gly-Pro-|-Ile.. In terms of biological role, removes N-terminal dipeptides sequentially from polypeptides having unsubstituted N-termini provided that the penultimate residue is proline. In Streptococcus macedonicus (Streptococcus gallolyticus macedonicus), this protein is Xaa-Pro dipeptidyl-peptidase.